Here is a 437-residue protein sequence, read N- to C-terminus: MEILMKSGDLNKYDLVKNALVLVLAGGRGSRLHELTDKRAKPALYFGGNRRIIDFALSNCINSDLNRIGVVTQYAAHSLLLHLQTGWSFLPQERGEFVDMLPARQQIDDSTWYRGTADAVYQNMAIIKNHYRPKYILILAGDHIYKQDYSVMLMDHVNSGAKCTVGCIEVPRSEAHEFGVMAVNENLKVKAFVEKPKDPPAMVGKPDVSLASMGIYVFDADYLYKMLEQEVNTPQTSHDFGKDVLPKCLEEGALYAHPFSRSCMGRNTEGEIYWRDVGTLDSFWQSNIDLVSENPQLDIYDQSWPIRGNPIQAYPSKFFYKHSNVHPVDNSLIGGGCVITDASISNSVLFDHIKIDAFSKVDHCVVLPQVKIGKNCVLKNCIIDRECEIPDGMQIGVDMEEDKKRFRISSTGKVILVTSKMLKILEGHEIGEEGHLD.

Residues Tyr-113, Gly-179, 194-195, and Ser-212 contribute to the alpha-D-glucose 1-phosphate site; that span reads EK.

It belongs to the bacterial/plant glucose-1-phosphate adenylyltransferase family. As to quaternary structure, homotetramer.

The enzyme catalyses alpha-D-glucose 1-phosphate + ATP + H(+) = ADP-alpha-D-glucose + diphosphate. It functions in the pathway glycan biosynthesis; glycogen biosynthesis. Functionally, involved in the biosynthesis of ADP-glucose, a building block required for the elongation reactions to produce glycogen. Catalyzes the reaction between ATP and alpha-D-glucose 1-phosphate (G1P) to produce pyrophosphate and ADP-Glc. The polypeptide is Glucose-1-phosphate adenylyltransferase (Haemophilus influenzae (strain ATCC 51907 / DSM 11121 / KW20 / Rd)).